The following is a 365-amino-acid chain: Sulfate/thiosulfate import ATP-binding protein CysA (365 aa).

Residues 3-237 (IEIANIKKSF…PATRFVLEFM (235 aa)) form the ABC transporter domain. Position 35–42 (35–42 (GPSGSGKT)) interacts with ATP.

The protein belongs to the ABC transporter superfamily. Sulfate/tungstate importer (TC 3.A.1.6) family. As to quaternary structure, the complex is composed of two ATP-binding proteins (CysA), two transmembrane proteins (CysT and CysW) and a solute-binding protein (CysP).

The protein resides in the cell inner membrane. The enzyme catalyses sulfate(out) + ATP + H2O = sulfate(in) + ADP + phosphate + H(+). It carries out the reaction thiosulfate(out) + ATP + H2O = thiosulfate(in) + ADP + phosphate + H(+). Functionally, part of the ABC transporter complex CysAWTP involved in sulfate/thiosulfate import. Responsible for energy coupling to the transport system. This chain is Sulfate/thiosulfate import ATP-binding protein CysA, found in Escherichia coli O6:H1 (strain CFT073 / ATCC 700928 / UPEC).